We begin with the raw amino-acid sequence, 413 residues long: Monacolin J acid methylbutanoyltransferase (413 aa).

A monacolin J-binding site is contributed by R73. S76 (acyl-ester intermediate) is an active-site residue. Positions 173, 188, and 258 each coordinate monacolin J. Residue G366 coordinates 2-methylbutanoate. Monacolin J is bound by residues E388 and W390.

This sequence belongs to the class-A beta-lactamase family. In terms of assembly, interacts with LovF.

It catalyses the reaction monacolin J carboxylate + (S)-2-methylbutanoyl-[2-methylbutanoate polyketide synthase] = lovastatin carboxylate + holo-[2-methylbutanoate polyketide synthase]. It participates in polyketide biosynthesis; lovastatin biosynthesis. Functionally, monacolin J acid methylbutanoyltransferase; part of the gene cluster that mediates the biosynthesis of lovastatin (also known as mevinolin, mevacor or monacolin K), a hypolipidemic inhibitor of (3S)-hydroxymethylglutaryl-coenzyme A (HMG-CoA) reductase (HMGR). The first step in the biosynthesis of lovastatin is the production of dihydromonacolin L acid by the lovastatin nonaketide synthase lovB and the trans-acting enoyl reductase lovC via condensation of one acetyl-CoA unit and 8 malonyl-CoA units. Dihydromonacolin L acid is released from lovB by the thioesterase lovG. Next, dihydromonacolin L acid is oxidized by the dihydromonacolin L monooxygenase lovA twice to form monacolin J acid. The 2-methylbutyrate moiety of lovastatin is synthesized by the lovastatin diketide synthase lovF via condensation of one acetyl-CoA unit and one malonyl-CoA unit. Finally, the covalent attachment of this moiety to monacolin J acid is catalyzed by the transesterase lovD to yield lovastatin. LovD has broad substrate specificity and can also convert monacolin J to simvastatin using alpha-dimethylbutanoyl-S-methyl-3-mercaptopropionate (DMB-S-MMP) as the thioester acyl donor, and can also catalyze the reverse reaction and function as hydrolase in vitro. LovD has much higher activity with LovF-bound 2-methylbutanoate than with free diketide substrates. The sequence is that of Monacolin J acid methylbutanoyltransferase from Aspergillus terreus.